A 229-amino-acid polypeptide reads, in one-letter code: Heptaprenylglyceryl phosphate synthase (229 aa).

K12 serves as a coordination point for sn-glycerol 1-phosphate. The Mg(2+) site is built by D14 and S40. Sn-glycerol 1-phosphate is bound by residues 159–164 (YLEYSG), G189, and 209–210 (GN).

The protein belongs to the GGGP/HepGP synthase family. Group I subfamily. In terms of assembly, homodimer. Mg(2+) is required as a cofactor.

The catalysed reaction is sn-glycerol 1-phosphate + all-trans-heptaprenyl diphosphate = 3-heptaprenyl-sn-glycero-1-phosphate + diphosphate. It participates in membrane lipid metabolism; glycerophospholipid metabolism. Functionally, prenyltransferase that catalyzes in vivo the transfer of the heptaprenyl moiety of heptaprenyl pyrophosphate (HepPP; 35 carbon atoms) to the C3 hydroxyl of sn-glycerol-1-phosphate (G1P), producing heptaprenylglyceryl phosphate (HepGP). This reaction is an ether-bond-formation step in the biosynthesis of archaea-type G1P-based membrane lipids found in Bacillales. The chain is Heptaprenylglyceryl phosphate synthase from Bacillus cytotoxicus (strain DSM 22905 / CIP 110041 / 391-98 / NVH 391-98).